A 467-amino-acid chain; its full sequence is Probable amino acid permease 7 (467 aa).

The Cytoplasmic portion of the chain corresponds to 1 to 29 (MDIKEDDESRVITPTELQLHDSVTARTGT). Residues 30 to 50 (LWTAVAHIITGVIGAGVLSLA) traverse the membrane as a helical segment. Topologically, residues 51 to 58 (WATAELGW) are extracellular. A helical transmembrane segment spans residues 59–79 (IAGPAALIAFAGVTLLSAFLL). Residues 80–111 (SDCYRFPDPNNGPLRLNSYSQAVKLYLGKKNE) are Cytoplasmic-facing. A helical membrane pass occupies residues 112–132 (IVCGVVVYISLFGCGIAYTIV). Over 133 to 163 (IATCSRAIMKSNCYHRNGHNATCSYGDNNNY) the chain is Extracellular. The next 2 membrane-spanning stretches (helical) occupy residues 164-184 (FMVL…FHNM) and 185-205 (VWLS…GIGL). The Extracellular portion of the chain corresponds to 206-231 (ALGKIIENRKIEGSIRGIPAENRGEK). The chain crosses the membrane as a helical span at residues 232 to 252 (VWIVFQALGNIAFSYPFSIIL). Over 253-274 (LEIQDTLRSPPAEKQTMKKAST) the chain is Cytoplasmic. The helical transmembrane segment at 275 to 295 (VAVFIQTFFFFCCGCFGYAAF) threads the bilayer. Over 296–312 (GDSTPGNLLTGFGFYEP) the chain is Extracellular. The chain crosses the membrane as a helical span at residues 313–333 (FWLVDFANACIVLHLVGGYQV). Topologically, residues 334–383 (YSQPIFAAAERSLTKKYPENKFIARFYGFKLPLLRGETVRLNPMRMCLRT) are cytoplasmic. 2 helical membrane passes run 384–404 (MYVL…EVLG) and 405–425 (VVGA…MCIL). Residues 426 to 443 (QKKIRSWTRPWLLLRGFS) lie on the Cytoplasmic side of the membrane. The chain crosses the membrane as a helical span at residues 444–464 (FVCLLVCLLSLVGSIYGLVGA). At 465-467 (KFG) the chain is on the extracellular side.

Belongs to the amino acid/polyamine transporter 2 family. Amino acid/auxin permease (AAAP) (TC 2.A.18.2) subfamily.

The protein localises to the cell membrane. Its function is as follows. Amino acid-proton symporter. Stereospecific transporter with a broad specificity for neutral amino acids. This Arabidopsis thaliana (Mouse-ear cress) protein is Probable amino acid permease 7 (AAP7).